The chain runs to 60 residues: Potassium channel toxin-like Tx677 (60 aa).

The N-terminal stretch at Met1–Gly22 is a signal peptide. Cystine bridges form between Cys30–Cys51, Cys36–Cys56, and Cys40–Cys58.

The protein belongs to the short scorpion toxin superfamily. Potassium channel inhibitor family. In terms of tissue distribution, expressed by the venom gland.

The protein localises to the secreted. In terms of biological role, weakly inhibits Kv11.1/KCNH2/ERG1, Kv1.2/KCNA2 and Kv1.3/KCNA3 voltage-gated potassium channels. The chain is Potassium channel toxin-like Tx677 from Buthus israelis (Israeli scorpion).